A 244-amino-acid chain; its full sequence is Probable Ni/Fe-hydrogenase B-type cytochrome subunit (244 aa).

4 consecutive transmembrane segments (helical) span residues 39–59, 73–93, 150–171, and 204–221; these read LWHW…FFIG, FLMG…AIGM, FAMF…FAMY, and LGMW…YAAI.

It belongs to the HupC/HyaC/HydC family.

The protein localises to the cell membrane. Its function is as follows. Probable b-type cytochrome. The protein is Probable Ni/Fe-hydrogenase B-type cytochrome subunit (hoxZ) of Cupriavidus necator (strain ATCC 17699 / DSM 428 / KCTC 22496 / NCIMB 10442 / H16 / Stanier 337) (Ralstonia eutropha).